Here is a 349-residue protein sequence, read N- to C-terminus: 11-beta-hydroxysteroid dehydrogenase 1A (349 aa).

A helical; Signal-anchor for type II membrane protein transmembrane segment spans residues 10-30 (LTAPFFTFFGLCFFLPPFYFF). NADP(+)-binding positions include 54 to 80 (GASS…TARR) and D105. S184 lines the substrate pocket. Y197 serves as the catalytic Proton acceptor. NADP(+) contacts are provided by residues 197 to 201 (YNASK) and K201.

Belongs to the short-chain dehydrogenases/reductases (SDR) family. As to expression, expressed in the above-ground part of seedlings, especially in the vascular tissues. Also detected in the buds and silique pedicels. Highly induced in oil-accumulating tissues of maturing seeds.

It is found in the lipid droplet. The protein localises to the membrane. The catalysed reaction is an 11beta-hydroxysteroid + NADP(+) = an 11-oxosteroid + NADPH + H(+). It catalyses the reaction 17beta-estradiol + NADP(+) = estrone + NADPH + H(+). The enzyme catalyses corticosterone + NADP(+) = 11-dehydrocorticosterone + NADPH + H(+). It carries out the reaction cortisone + NADPH + H(+) = cortisol + NADP(+). Functionally, catalyzes 11-beta, 17-beta-hydroxysteroid and reduces 17-beta-ketosteroids. Involved in regulating plant growth and development, probably promoting or mediating brassinosteroid effects. Plays a role during seed maturation. This is 11-beta-hydroxysteroid dehydrogenase 1A (HSD1) from Arabidopsis thaliana (Mouse-ear cress).